Reading from the N-terminus, the 286-residue chain is D-tagatose-1,6-bisphosphate aldolase subunit KbaY (286 aa).

D82 serves as the catalytic Proton donor. 2 residues coordinate Zn(2+): H83 and H180. A dihydroxyacetone phosphate-binding site is contributed by G181. Zn(2+) is bound at residue H208. Residues 209-211 (GAS) and 230-233 (NVAT) contribute to the dihydroxyacetone phosphate site.

It belongs to the class II fructose-bisphosphate aldolase family. TagBP aldolase KbaY subfamily. As to quaternary structure, homotetramer. Forms a complex with KbaZ. The cofactor is Zn(2+).

It catalyses the reaction D-tagatofuranose 1,6-bisphosphate = D-glyceraldehyde 3-phosphate + dihydroxyacetone phosphate. It participates in carbohydrate metabolism; D-tagatose 6-phosphate degradation; D-glyceraldehyde 3-phosphate and glycerone phosphate from D-tagatose 6-phosphate: step 2/2. Catalytic subunit of the tagatose-1,6-bisphosphate aldolase KbaYZ, which catalyzes the reversible aldol condensation of dihydroxyacetone phosphate (DHAP or glycerone-phosphate) with glyceraldehyde 3-phosphate (G3P) to produce tagatose 1,6-bisphosphate (TBP). Requires KbaZ subunit for full activity and stability. The chain is D-tagatose-1,6-bisphosphate aldolase subunit KbaY from Escherichia coli O127:H6 (strain E2348/69 / EPEC).